The following is a 331-amino-acid chain: tRNA N6-adenosine threonylcarbamoyltransferase (331 aa).

Residues H109, H113, and Y130 each coordinate Fe cation. Substrate-binding positions include 130-134, D162, D183, and S262; that span reads YLSGG. D290 is a Fe cation binding site.

Belongs to the KAE1 / TsaD family. The cofactor is Fe(2+).

Its subcellular location is the cytoplasm. The enzyme catalyses L-threonylcarbamoyladenylate + adenosine(37) in tRNA = N(6)-L-threonylcarbamoyladenosine(37) in tRNA + AMP + H(+). Functionally, required for the formation of a threonylcarbamoyl group on adenosine at position 37 (t(6)A37) in tRNAs that read codons beginning with adenine. Is probably involved in the transfer of the threonylcarbamoyl moiety of threonylcarbamoyl-AMP (TC-AMP) to the N6 group of A37. The protein is tRNA N6-adenosine threonylcarbamoyltransferase of Metallosphaera sedula (strain ATCC 51363 / DSM 5348 / JCM 9185 / NBRC 15509 / TH2).